An 893-amino-acid chain; its full sequence is Major vault protein (893 aa).

Residue alanine 2 is modified to N-acetylalanine. MVP repeat units lie at residues 2–56, 57–111, 112–164, 165–217, 218–272, 273–323, 324–379, 380–457, and 458–520; these read ATEE…VPPR, HYCT…DITP, LQVV…EIIQ, ATII…DLVD, AVIL…GVVP, ITTL…IQDV, YVLS…ERQA, IPLD…KTRV, and VSYR…LLGP. Lysine 444 participates in a covalent cross-link: Glycyl lysine isopeptide (Lys-Gly) (interchain with G-Cter in SUMO2). The residue at position 445 (serine 445) is a Phosphoserine. Lysine 704 participates in a covalent cross-link: Glycyl lysine isopeptide (Lys-Gly) (interchain with G-Cter in SUMO2). The disordered stretch occupies residues 856–893; it reads QPLGRRVASGPSPGEGISPQSAQAPQAPGDNHVVPVLR.

In terms of assembly, the vault ribonucleoprotein particle is a huge (400 A x 670 A) cage structure of 12.9 MDa. It consists of a dimer of half-vaults, with each half-vault comprising 39 identical major vault protein (MVP) chains, PARP4 and one or more vault RNAs (vRNAs). Interacts with TEP1. Interacts with PTEN and activated MAPK1. The phosphorylated protein interacts with the SH2 domains of PTPN11 and SRC. Interacts with APEX1. May interact with ZNF540. Post-translationally, phosphorylated on Tyr residues after EGF stimulation. Dephosphorylated by PTPN11. In terms of tissue distribution, present in most normal tissues. Higher expression observed in epithelial cells with secretory and excretory functions, as well as in cells chronically exposed to xenobiotics, such as bronchial cells and cells lining the intestine. Overexpressed in many multidrug-resistant cancer cells.

It localises to the cytoplasm. The protein localises to the nucleus. The protein resides in the nuclear pore complex. It is found in the perinuclear region. Functionally, required for normal vault structure. Vaults are multi-subunit structures that may act as scaffolds for proteins involved in signal transduction. Vaults may also play a role in nucleo-cytoplasmic transport. Down-regulates IFNG-mediated STAT1 signaling and subsequent activation of JAK. Down-regulates SRC activity and signaling through MAP kinases. This Homo sapiens (Human) protein is Major vault protein (MVP).